Here is a 238-residue protein sequence, read N- to C-terminus: Ribosomal RNA small subunit methyltransferase I (238 aa).

The protein belongs to the methyltransferase superfamily. RsmI family.

It is found in the cytoplasm. The enzyme catalyses cytidine(1402) in 16S rRNA + S-adenosyl-L-methionine = 2'-O-methylcytidine(1402) in 16S rRNA + S-adenosyl-L-homocysteine + H(+). Functionally, catalyzes the 2'-O-methylation of the ribose of cytidine 1402 (C1402) in 16S rRNA. The sequence is that of Ribosomal RNA small subunit methyltransferase I from Mesomycoplasma conjunctivae (strain ATCC 25834 / NCTC 10147 / HRC/581) (Mycoplasma conjunctivae).